A 393-amino-acid chain; its full sequence is ATP phosphoribosyltransferase regulatory subunit (393 aa).

The protein belongs to the class-II aminoacyl-tRNA synthetase family. HisZ subfamily. Heteromultimer composed of HisG and HisZ subunits.

The protein localises to the cytoplasm. It participates in amino-acid biosynthesis; L-histidine biosynthesis; L-histidine from 5-phospho-alpha-D-ribose 1-diphosphate: step 1/9. Its function is as follows. Required for the first step of histidine biosynthesis. May allow the feedback regulation of ATP phosphoribosyltransferase activity by histidine. The chain is ATP phosphoribosyltransferase regulatory subunit from Chromohalobacter salexigens (strain ATCC BAA-138 / DSM 3043 / CIP 106854 / NCIMB 13768 / 1H11).